We begin with the raw amino-acid sequence, 431 residues long: Gamma-glutamyl phosphate reductase (431 aa).

Belongs to the gamma-glutamyl phosphate reductase family.

Its subcellular location is the cytoplasm. It catalyses the reaction L-glutamate 5-semialdehyde + phosphate + NADP(+) = L-glutamyl 5-phosphate + NADPH + H(+). The protein operates within amino-acid biosynthesis; L-proline biosynthesis; L-glutamate 5-semialdehyde from L-glutamate: step 2/2. In terms of biological role, catalyzes the NADPH-dependent reduction of L-glutamate 5-phosphate into L-glutamate 5-semialdehyde and phosphate. The product spontaneously undergoes cyclization to form 1-pyrroline-5-carboxylate. The chain is Gamma-glutamyl phosphate reductase from Synechococcus elongatus (strain ATCC 33912 / PCC 7942 / FACHB-805) (Anacystis nidulans R2).